A 128-amino-acid chain; its full sequence is Fluoride-specific ion channel FluC (128 aa).

Helical transmembrane passes span 5–25 (LFISCGAILGASLRWAIGLLF), 34–54 (FGALIANLLGCLIIGVLLGLF), 67–87 (FLITGFLGSLTTFSSFSSEVV), and 99–119 (FCVLMMHLFGCLAMTVLGIWI). Residues Gly74 and Thr77 each contribute to the Na(+) site.

The protein belongs to the fluoride channel Fluc/FEX (TC 1.A.43) family.

It localises to the cell inner membrane. The enzyme catalyses fluoride(in) = fluoride(out). With respect to regulation, na(+) is not transported, but it plays an essential structural role and its presence is essential for fluoride channel function. Its function is as follows. Fluoride-specific ion channel. Important for reducing fluoride concentration in the cell, thus reducing its toxicity. The chain is Fluoride-specific ion channel FluC from Haemophilus influenzae (strain PittEE).